A 256-amino-acid polypeptide reads, in one-letter code: Triosephosphate isomerase (256 aa).

9–11 (NWK) is a binding site for substrate. The Electrophile role is filled by histidine 97. The active-site Proton acceptor is the glutamate 169. Substrate is bound by residues glycine 175, serine 214, and 235–236 (GG).

Belongs to the triosephosphate isomerase family. As to quaternary structure, homodimer.

It localises to the cytoplasm. It catalyses the reaction D-glyceraldehyde 3-phosphate = dihydroxyacetone phosphate. Its pathway is carbohydrate biosynthesis; gluconeogenesis. It functions in the pathway carbohydrate degradation; glycolysis; D-glyceraldehyde 3-phosphate from glycerone phosphate: step 1/1. Its function is as follows. Involved in the gluconeogenesis. Catalyzes stereospecifically the conversion of dihydroxyacetone phosphate (DHAP) to D-glyceraldehyde-3-phosphate (G3P). The sequence is that of Triosephosphate isomerase from Moritella marina (Vibrio marinus).